The sequence spans 246 residues: 1-(5-phosphoribosyl)-5-[(5-phosphoribosylamino)methylideneamino] imidazole-4-carboxamide isomerase (246 aa).

Catalysis depends on D7, which acts as the Proton acceptor. Residue D129 is the Proton donor of the active site.

It belongs to the HisA/HisF family.

It is found in the cytoplasm. The enzyme catalyses 1-(5-phospho-beta-D-ribosyl)-5-[(5-phospho-beta-D-ribosylamino)methylideneamino]imidazole-4-carboxamide = 5-[(5-phospho-1-deoxy-D-ribulos-1-ylimino)methylamino]-1-(5-phospho-beta-D-ribosyl)imidazole-4-carboxamide. The protein operates within amino-acid biosynthesis; L-histidine biosynthesis; L-histidine from 5-phospho-alpha-D-ribose 1-diphosphate: step 4/9. This Buchnera aphidicola subsp. Acyrthosiphon pisum (strain 5A) protein is 1-(5-phosphoribosyl)-5-[(5-phosphoribosylamino)methylideneamino] imidazole-4-carboxamide isomerase.